We begin with the raw amino-acid sequence, 408 residues long: Arginine biosynthesis bifunctional protein ArgJ (408 aa).

Residues Thr-156, Lys-182, Thr-193, Glu-279, Asn-403, and Thr-408 each contribute to the substrate site. Thr-193 serves as the catalytic Nucleophile.

Belongs to the ArgJ family. In terms of assembly, heterotetramer of two alpha and two beta chains.

It is found in the cytoplasm. The catalysed reaction is N(2)-acetyl-L-ornithine + L-glutamate = N-acetyl-L-glutamate + L-ornithine. It catalyses the reaction L-glutamate + acetyl-CoA = N-acetyl-L-glutamate + CoA + H(+). Its pathway is amino-acid biosynthesis; L-arginine biosynthesis; L-ornithine and N-acetyl-L-glutamate from L-glutamate and N(2)-acetyl-L-ornithine (cyclic): step 1/1. It functions in the pathway amino-acid biosynthesis; L-arginine biosynthesis; N(2)-acetyl-L-ornithine from L-glutamate: step 1/4. In terms of biological role, catalyzes two activities which are involved in the cyclic version of arginine biosynthesis: the synthesis of N-acetylglutamate from glutamate and acetyl-CoA as the acetyl donor, and of ornithine by transacetylation between N(2)-acetylornithine and glutamate. The protein is Arginine biosynthesis bifunctional protein ArgJ of Methylococcus capsulatus (strain ATCC 33009 / NCIMB 11132 / Bath).